A 363-amino-acid chain; its full sequence is Succinyl-diaminopimelate desuccinylase (363 aa).

His63 is a binding site for Zn(2+). Residue Asp65 is part of the active site. Zn(2+) is bound at residue Asp94. Glu123 serves as the catalytic Proton acceptor. Zn(2+)-binding residues include Glu124, Glu152, and His337.

Belongs to the peptidase M20A family. DapE subfamily. Homodimer. Zn(2+) is required as a cofactor. The cofactor is Co(2+).

The enzyme catalyses N-succinyl-(2S,6S)-2,6-diaminopimelate + H2O = (2S,6S)-2,6-diaminopimelate + succinate. It functions in the pathway amino-acid biosynthesis; L-lysine biosynthesis via DAP pathway; LL-2,6-diaminopimelate from (S)-tetrahydrodipicolinate (succinylase route): step 3/3. Catalyzes the hydrolysis of N-succinyl-L,L-diaminopimelic acid (SDAP), forming succinate and LL-2,6-diaminopimelate (DAP), an intermediate involved in the bacterial biosynthesis of lysine and meso-diaminopimelic acid, an essential component of bacterial cell walls. This chain is Succinyl-diaminopimelate desuccinylase, found in Campylobacter concisus (strain 13826).